The chain runs to 244 residues: MANVSMRDMLQAGVHFGHQTRYWNPKMKPFIFGARNKVHIINLEKTVPMFNSALDFLEQKAAKKGKVLFVGTKRAASDAVKEAAISCDQFYVDHRWLGGMLTNWKTVRQSIKRLKDLEVQSQDGTFDKVTKKEALMLARELEKLDKTLGGIKNMGGIPDVIFVIDADHEHIAIKEANNLGIPVISIVDTNSCPDNIDYVVPGNDDAIRAIKLYLEAAATTIKAGREQDVIVQAEQDGFVEEVSE.

The protein belongs to the universal ribosomal protein uS2 family.

The protein is Small ribosomal subunit protein uS2 of Psychromonas ingrahamii (strain DSM 17664 / CCUG 51855 / 37).